Here is a 76-residue protein sequence, read N- to C-terminus: Sec-independent protein translocase protein TatA (76 aa).

The helical transmembrane segment at 1-21 threads the bilayer; the sequence is MGSFSIWHWLIVLLIVVLVFG. Residues 44–76 form a disordered region; that stretch reads RDGSTAPADPAQQVTANKSADANTVDVEAKQKS. Residues 55–65 are compositionally biased toward polar residues; that stretch reads QQVTANKSADA.

The protein belongs to the TatA/E family. As to quaternary structure, the Tat system comprises two distinct complexes: a TatABC complex, containing multiple copies of TatA, TatB and TatC subunits, and a separate TatA complex, containing only TatA subunits. Substrates initially bind to the TatABC complex, which probably triggers association of the separate TatA complex to form the active translocon.

The protein localises to the cell inner membrane. Functionally, part of the twin-arginine translocation (Tat) system that transports large folded proteins containing a characteristic twin-arginine motif in their signal peptide across membranes. TatA could form the protein-conducting channel of the Tat system. The polypeptide is Sec-independent protein translocase protein TatA (Methylibium petroleiphilum (strain ATCC BAA-1232 / LMG 22953 / PM1)).